The following is a 349-amino-acid chain: Protein MULTIPLE CHLOROPLAST DIVISION SITE 1 (349 aa).

A chloroplast-targeting transit peptide spans 1–52; that stretch reads MASIDSLQFHSLCNLQSSIGRAKLQNPSSLVIFRRRPVNLNWVQFETKGSFV. The Chloroplast intermembrane portion of the chain corresponds to 53–116; sequence CKAIGDSSTP…VVFLMKKCSV (64 aa). Residues 117–139 traverse the membrane as a helical segment; it reads NSIWIGVCITATVLVAAIRAYVV. At 140–349 the chain is on the stromal side; that stretch reads RKSRDNQRAG…NSSSEETHKS (210 aa). Residues 315-349 form a disordered region; the sequence is QRPYKFSAKLEGENIQKNSQENHTGNSSSEETHKS. The span at 329–343 shows a compositional bias: polar residues; sequence IQKNSQENHTGNSSS.

In terms of assembly, interacts with MIND1. Interacts with ARC6 in the chloroplast stroma and binds to FtsZ2-1 in an ARC6-dependent manner.

It localises to the plastid. Its subcellular location is the chloroplast inner membrane. In terms of biological role, required for chloroplast division. Together with MIND1 and ARC3, regulates FtsZ ring positioning in chloroplasts in an ARC6-dependent manner. Determines the site of chloroplast division in concert with MIND1. Not directly involved in ring formation, but required for MIND1 and MINE1 localization to regulate FtsZ ring formation during plastidial constriction. The protein is Protein MULTIPLE CHLOROPLAST DIVISION SITE 1 of Arabidopsis thaliana (Mouse-ear cress).